Reading from the N-terminus, the 307-residue chain is Ornithine carbamoyltransferase (307 aa).

Residues 54 to 57 (STRT), Q81, R105, and 132 to 135 (HPCQ) each bind carbamoyl phosphate. Residues N163, D221, and 225–226 (SM) each bind L-ornithine. Carbamoyl phosphate is bound by residues 261–262 (CL) and R289.

This sequence belongs to the aspartate/ornithine carbamoyltransferase superfamily. OTCase family.

It is found in the cytoplasm. It carries out the reaction carbamoyl phosphate + L-ornithine = L-citrulline + phosphate + H(+). It functions in the pathway amino-acid biosynthesis; L-arginine biosynthesis; L-arginine from L-ornithine and carbamoyl phosphate: step 1/3. Functionally, reversibly catalyzes the transfer of the carbamoyl group from carbamoyl phosphate (CP) to the N(epsilon) atom of ornithine (ORN) to produce L-citrulline. The sequence is that of Ornithine carbamoyltransferase from Chromobacterium violaceum (strain ATCC 12472 / DSM 30191 / JCM 1249 / CCUG 213 / NBRC 12614 / NCIMB 9131 / NCTC 9757 / MK).